A 151-amino-acid polypeptide reads, in one-letter code: Metalloproteinase inhibitor 3 (151 aa).

Residues 1-108 (CNSDIVIRAK…GLNYRYHLGC (108 aa)) enclose the NTR domain. 3 disulfide bridges follow: Cys-1–Cys-108, Cys-115–Cys-120, and Cys-128–Cys-149. The interval 53 to 54 (ES) is involved in metalloproteinase-binding. A mediates interaction with EFEMP1 region spans residues 71–151 (GRVYDGKVYT…YQSKHYACIR (81 aa)).

The protein belongs to the protease inhibitor I35 (TIMP) family. As to quaternary structure, interacts with EFEMP1.

The protein localises to the secreted. Its subcellular location is the extracellular space. It localises to the extracellular matrix. Its function is as follows. Complexes with metalloproteinases (such as collagenases) and irreversibly inactivates them by binding to their catalytic zinc cofactor. May form part of a tissue-specific acute response to remodeling stimuli. The chain is Metalloproteinase inhibitor 3 (TIMP3) from Oryctolagus cuniculus (Rabbit).